A 280-amino-acid chain; its full sequence is Orotidine 5'-phosphate decarboxylase (280 aa).

The Proton donor role is filled by Lys97.

It belongs to the OMP decarboxylase family. Type 2 subfamily.

The enzyme catalyses orotidine 5'-phosphate + H(+) = UMP + CO2. Its pathway is pyrimidine metabolism; UMP biosynthesis via de novo pathway; UMP from orotate: step 2/2. This Corynebacterium efficiens (strain DSM 44549 / YS-314 / AJ 12310 / JCM 11189 / NBRC 100395) protein is Orotidine 5'-phosphate decarboxylase (pyrF).